The following is a 70-amino-acid chain: Large ribosomal subunit protein eL38 (70 aa).

Belongs to the eukaryotic ribosomal protein eL38 family.

The chain is Large ribosomal subunit protein eL38 (rpl-38) from Ostertagia ostertagi (Brown stomach worm).